The primary structure comprises 257 residues: NAD kinase (257 aa).

The Proton acceptor role is filled by Asp46. NAD(+)-binding positions include 46–47, 116–117, Asp146, Ala154, 157–162, and Asn218; these read DG, NE, and TAYNLS.

Belongs to the NAD kinase family. A divalent metal cation is required as a cofactor.

Its subcellular location is the cytoplasm. It catalyses the reaction NAD(+) + ATP = ADP + NADP(+) + H(+). Functionally, involved in the regulation of the intracellular balance of NAD and NADP, and is a key enzyme in the biosynthesis of NADP. Catalyzes specifically the phosphorylation on 2'-hydroxyl of the adenosine moiety of NAD to yield NADP. This Brucella suis biovar 1 (strain 1330) protein is NAD kinase.